Consider the following 543-residue polypeptide: MAAAAAGAASAELVIGWCIFGLLLLAILAFCWIYVRKYQSQRESEVVSTITAIFSLAIALITSALLPVDIFLVSYMKNQNGTFKDWANGNVSRQIEDTVLYGYYTLYSVILFCVFFWIPFVYFYYEEKDDDDTGKCTQVKMALKYTLGFVVICALLLLVGAFVPLNLPDNKNSTEWEKVKFLFEELGSSHGLAALSFSISSLTLVGMLAAIIYTAYGMSALPLNLIKGTRNAAYERLENTEDIEEVEQHIQTIKSKSKDGRPLPARDRRALKQFEERLRTLRKRERRLEFIENSWWTKFCGALRPLKIIWGIFFIFVALLFVISLFLSNLDKALHSAGIDSGFIIFGANLSNPLNMLLPLLQTVFPLDYILITIIIMYFIFTSMAGIRNIGIWFFWIRLYKIRRGRTRPQALLFLCMILLLIVLHTSYMIYSLAPQYVMYGSQNYLIESNMTYNDHRGNSSLSVPKRCDADAPEDQCTVTRTYLFLHKFWFFSAAYYFGNWAFLGVFIVGFIVSCCKGKKSVLERVDEDDSDLSDDEPSLYSV.

At 1 to 12 the chain is on the extracellular side; the sequence is MAAAAAGAASAE. A helical membrane pass occupies residues 13 to 33; that stretch reads LVIGWCIFGLLLLAILAFCWI. At 34-52 the chain is on the cytoplasmic side; it reads YVRKYQSQRESEVVSTITA. Residues 53 to 73 traverse the membrane as a helical segment; sequence IFSLAIALITSALLPVDIFLV. Residues 74–102 are Extracellular-facing; that stretch reads SYMKNQNGTFKDWANGNVSRQIEDTVLYG. N-linked (GlcNAc...) asparagine glycans are attached at residues N80 and N90. The chain crosses the membrane as a helical span at residues 103–123; that stretch reads YYTLYSVILFCVFFWIPFVYF. The Cytoplasmic segment spans residues 124-146; the sequence is YYEEKDDDDTGKCTQVKMALKYT. A helical transmembrane segment spans residues 147-167; that stretch reads LGFVVICALLLLVGAFVPLNL. The Extracellular segment spans residues 168 to 190; it reads PDNKNSTEWEKVKFLFEELGSSH. N172 carries an N-linked (GlcNAc...) asparagine glycan. The helical transmembrane segment at 191–211 threads the bilayer; it reads GLAALSFSISSLTLVGMLAAI. Topologically, residues 212–307 are cytoplasmic; sequence IYTAYGMSAL…KFCGALRPLK (96 aa). The YERL motif; mediates interaction with adapter protein complex 2 and is essential for its function in clathrin-mediated endocytosis of INSR motif lies at 234 to 237; it reads YERL. T240 bears the Phosphothreonine mark. A WTKF motif; mediates interaction with adapter protein complex 2 and is essential for its function in clathrin-mediated endocytosis of INSR motif is present at residues 296-299; the sequence is WTKF. A helical membrane pass occupies residues 308-328; sequence IIWGIFFIFVALLFVISLFLS. Residues 329–366 are Extracellular-facing; the sequence is NLDKALHSAGIDSGFIIFGANLSNPLNMLLPLLQTVFP. N349 carries N-linked (GlcNAc...) asparagine glycosylation. The chain crosses the membrane as a helical span at residues 367 to 387; the sequence is LDYILITIIIMYFIFTSMAGI. Residues 388-410 lie on the Cytoplasmic side of the membrane; the sequence is RNIGIWFFWIRLYKIRRGRTRPQ. Residues 411–431 form a helical membrane-spanning segment; that stretch reads ALLFLCMILLLIVLHTSYMIY. Over 432 to 488 the chain is Extracellular; it reads SLAPQYVMYGSQNYLIESNMTYNDHRGNSSLSVPKRCDADAPEDQCTVTRTYLFLHK. 2 N-linked (GlcNAc...) asparagine glycosylation sites follow: N450 and N459. A helical membrane pass occupies residues 489–509; the sequence is FWFFSAAYYFGNWAFLGVFIV. Residues 510–543 lie on the Cytoplasmic side of the membrane; it reads GFIVSCCKGKKSVLERVDEDDSDLSDDEPSLYSV. A phosphoserine mark is found at S531 and S534.

This sequence belongs to the LIMR family. LMBRD1 subfamily. As to quaternary structure, interacts with ABCD4; this interaction induces the translocation of ABCD4 from the endoplasmic reticulum to the lysosome. Interacts with ABCD4 and MMACHC; this interaction ensures the transport of cobalamin from the lysosome to the cytoplasm. Interacts with INSR, adapter protein complex 2 and clathrin heavy chain. N-glycosylated.

The protein localises to the endoplasmic reticulum membrane. It localises to the lysosome membrane. It is found in the cell membrane. Its subcellular location is the cytoplasmic vesicle. The protein resides in the clathrin-coated vesicle. Its function is as follows. Lysosomal membrane chaperone required to export cobalamin (vitamin B12) from the lysosome to the cytosol, allowing its conversion to cofactors. Targets ABCD4 transporter from the endoplasmic reticulum to the lysosome. Then forms a complex with lysosomal ABCD4 and cytoplasmic MMACHC to transport cobalamin across the lysosomal membrane. Acts as an adapter protein which plays an important role in mediating and regulating the internalization of the insulin receptor (INSR). Involved in clathrin-mediated endocytosis of INSR via its interaction with adapter protein complex 2. Essential for the initiation of gastrulation and early formation of mesoderm structures during embryogenesis. The polypeptide is Lysosomal cobalamin transport escort protein LMBD1 (LMBRD1) (Bos taurus (Bovine)).